Consider the following 204-residue polypeptide: Large ribosomal subunit protein uL4 (204 aa).

Residues 42-52 are compositionally biased toward polar residues; that stretch reads GTKAQKSRSQV. Residues 42 to 70 are disordered; it reads GTKAQKSRSQVSGTTKKSKKQKGGGARHG.

The protein belongs to the universal ribosomal protein uL4 family. As to quaternary structure, part of the 50S ribosomal subunit.

Its function is as follows. One of the primary rRNA binding proteins, this protein initially binds near the 5'-end of the 23S rRNA. It is important during the early stages of 50S assembly. It makes multiple contacts with different domains of the 23S rRNA in the assembled 50S subunit and ribosome. In terms of biological role, forms part of the polypeptide exit tunnel. The chain is Large ribosomal subunit protein uL4 from Xylella fastidiosa (strain M12).